We begin with the raw amino-acid sequence, 366 residues long: Uroporphyrinogen decarboxylase (366 aa).

Substrate-binding positions include 28 to 32, D78, Y160, T215, and H333; that span reads RQAGR.

It belongs to the uroporphyrinogen decarboxylase family. Homodimer.

The protein resides in the cytoplasm. The catalysed reaction is uroporphyrinogen III + 4 H(+) = coproporphyrinogen III + 4 CO2. Its pathway is porphyrin-containing compound metabolism; protoporphyrin-IX biosynthesis; coproporphyrinogen-III from 5-aminolevulinate: step 4/4. Catalyzes the decarboxylation of four acetate groups of uroporphyrinogen-III to yield coproporphyrinogen-III. This is Uroporphyrinogen decarboxylase from Paraburkholderia phytofirmans (strain DSM 17436 / LMG 22146 / PsJN) (Burkholderia phytofirmans).